Consider the following 362-residue polypeptide: Peptide chain release factor 1 (362 aa).

Residue Gln240 is modified to N5-methylglutamine.

It belongs to the prokaryotic/mitochondrial release factor family. Post-translationally, methylated by PrmC. Methylation increases the termination efficiency of RF1.

It is found in the cytoplasm. Functionally, peptide chain release factor 1 directs the termination of translation in response to the peptide chain termination codons UAG and UAA. The protein is Peptide chain release factor 1 of Bifidobacterium adolescentis (strain ATCC 15703 / DSM 20083 / NCTC 11814 / E194a).